A 297-amino-acid polypeptide reads, in one-letter code: Pyrroline-5-carboxylate reductase 1 (297 aa).

Belongs to the pyrroline-5-carboxylate reductase family.

Its subcellular location is the cytoplasm. The catalysed reaction is L-proline + NADP(+) = (S)-1-pyrroline-5-carboxylate + NADPH + 2 H(+). It carries out the reaction L-proline + NAD(+) = (S)-1-pyrroline-5-carboxylate + NADH + 2 H(+). Its pathway is amino-acid biosynthesis; L-proline biosynthesis; L-proline from L-glutamate 5-semialdehyde: step 1/1. Functionally, catalyzes the reduction of 1-pyrroline-5-carboxylate (PCA) to L-proline. This Bacillus subtilis (strain 168) protein is Pyrroline-5-carboxylate reductase 1 (proH).